The following is a 606-amino-acid chain: Electron transfer flavoprotein-ubiquinone oxidoreductase, mitochondrial (606 aa).

Residue 59-73 (VVIVGAGPSGLSTAI) coordinates FAD. The chain crosses the membrane as a helical span at residues 448–468 (PSLHWGTIPGLIYGALEMYIF). Positions 551, 575, 578, and 581 each coordinate [4Fe-4S] cluster.

The protein belongs to the ETF-QO/FixC family. Monomer. Requires [4Fe-4S] cluster as cofactor. FAD serves as cofactor.

The protein localises to the mitochondrion inner membrane. It catalyses the reaction a ubiquinone + reduced [electron-transfer flavoprotein] = a ubiquinol + oxidized [electron-transfer flavoprotein] + H(+). Functionally, accepts electrons from ETF and reduces ubiquinone. The protein is Electron transfer flavoprotein-ubiquinone oxidoreductase, mitochondrial (etfdh) of Dictyostelium discoideum (Social amoeba).